The chain runs to 235 residues: Phosphoribosylaminoimidazole-succinocarboxamide synthase (235 aa).

This sequence belongs to the SAICAR synthetase family.

The enzyme catalyses 5-amino-1-(5-phospho-D-ribosyl)imidazole-4-carboxylate + L-aspartate + ATP = (2S)-2-[5-amino-1-(5-phospho-beta-D-ribosyl)imidazole-4-carboxamido]succinate + ADP + phosphate + 2 H(+). It participates in purine metabolism; IMP biosynthesis via de novo pathway; 5-amino-1-(5-phospho-D-ribosyl)imidazole-4-carboxamide from 5-amino-1-(5-phospho-D-ribosyl)imidazole-4-carboxylate: step 1/2. This Streptococcus thermophilus (strain ATCC BAA-250 / LMG 18311) protein is Phosphoribosylaminoimidazole-succinocarboxamide synthase.